The primary structure comprises 224 residues: Biotin transport ATP-binding protein BioM (224 aa).

In terms of domain architecture, ABC transporter spans 3–224 (IQFESAGVSF…AIARYREIAA (222 aa)). 34–41 (GLNGSGKT) lines the ATP pocket.

The protein belongs to the ABC transporter superfamily. As to quaternary structure, part of a biotin transporter complex composed of BioM, BioN and BioY.

It localises to the cell inner membrane. Functionally, involved in biotin uptake. This is Biotin transport ATP-binding protein BioM (bioM) from Rhizobium etli (strain ATCC 51251 / DSM 11541 / JCM 21823 / NBRC 15573 / CFN 42).